Reading from the N-terminus, the 271-residue chain is Protein ABHD14A (271 aa).

Residues V35 to P55 form a helical; Signal-anchor for type II membrane protein membrane-spanning segment. Residue N67 is glycosylated (N-linked (GlcNAc...) asparagine). Catalysis depends on S171, which acts as the Charge relay system. N-linked (GlcNAc...) asparagine glycosylation is present at N201. Catalysis depends on charge relay system residues D222 and H249.

It belongs to the AB hydrolase superfamily. ABHD14 family.

The protein localises to the cytoplasm. Its subcellular location is the membrane. Possible role in granule neuron development. This Homo sapiens (Human) protein is Protein ABHD14A.